Reading from the N-terminus, the 218-residue chain is Ribose-5-phosphate isomerase A (218 aa).

Substrate is bound by residues 28-31 (TGST), 81-84 (DGAD), and 94-97 (KGGG). The active-site Proton acceptor is the Glu-103. Position 121 (Lys-121) interacts with substrate.

The protein belongs to the ribose 5-phosphate isomerase family. Homodimer.

It catalyses the reaction aldehydo-D-ribose 5-phosphate = D-ribulose 5-phosphate. The protein operates within carbohydrate degradation; pentose phosphate pathway; D-ribose 5-phosphate from D-ribulose 5-phosphate (non-oxidative stage): step 1/1. Functionally, catalyzes the reversible conversion of ribose-5-phosphate to ribulose 5-phosphate. The polypeptide is Ribose-5-phosphate isomerase A (Shewanella woodyi (strain ATCC 51908 / MS32)).